A 394-amino-acid chain; its full sequence is 2-aminobenzenesulfonate 2,3-dioxygenase subunit alpha (394 aa).

Positions 43–154 constitute a Rieske domain; sequence WKFVCHVSEI…TETYLGLVFV (112 aa). Residues Cys-85, His-87, Cys-105, and His-108 each contribute to the [2Fe-2S] cluster site. 2 residues coordinate Fe cation: His-209 and His-213.

Belongs to the bacterial ring-hydroxylating dioxygenase alpha subunit family. Heterotetramer with a alpha2beta2 structure. It depends on [2Fe-2S] cluster as a cofactor. Requires Fe cation as cofactor.

The catalysed reaction is 2-aminobenzenesulfonate + NADH + O2 + 2 H(+) = 2,3-dihydroxybenzenesulfonate + NH4(+) + NAD(+). Inhibited by o-phenanthroline. Functionally, alpha subunit of the oxygenase component of the 2-aminobenzenesulfonate 2,3-dioxygenase system (deaminating) (ABSDOS). Can use 2-aminobenzenesulfonate (ABS), benzenesulfonate (BS), 4-toluenesulfonate (TS), 2-nitrobenzenesulfonate, 3- and 4-aminobenzenesulfonates, 4-chloro- and 4-hydroxybenzenesulfonates and pyridine-3-sulfonate as substrates. No desulfonation of ABS to aminocatechol or aminophenol detected. The protein is 2-aminobenzenesulfonate 2,3-dioxygenase subunit alpha of Alcaligenes sp.